Consider the following 386-residue polypeptide: Prostacyclin receptor (386 aa).

At 1-16 (MADSCRNLTYVRGSVG) the chain is on the extracellular side. 2 disulfide bridges follow: C5-C165 and C92-C170. N7 carries N-linked (GlcNAc...) asparagine glycosylation. Residues 17-38 (PATSTLMFVAGVVGNGLALGIL) form a helical membrane-spanning segment. Over 39–51 (SARRPARPSAFAV) the chain is Cytoplasmic. The helical transmembrane segment at 52–76 (LVTGLAATDLLGTSFLSPAVFVAYA) threads the bilayer. The Extracellular portion of the chain corresponds to 77–94 (RNSSLLGLARGGPALCDA). The chain crosses the membrane as a helical span at residues 95-115 (FAFAMTFFGLASMLILFAMAV). Over 116-134 (ERCLALSHPYLYAQLDGPR) the chain is Cytoplasmic. The helical transmembrane segment at 135–158 (CARLALPAIYAFCVLFCALPLLGL) threads the bilayer. Topologically, residues 159–181 (GQHQQYCPGSWCFLRMRWAQPGG) are extracellular. The chain crosses the membrane as a helical span at residues 182-208 (AAFSLAYAGLVALLVAAIFLCNGSVTL). The Cytoplasmic segment spans residues 209–235 (SLCRMYRQQKRHQGSLGPRPRTGEDEV). Residues 236–260 (DHLILLALMTVVMAVCSLPLTIRCF) traverse the membrane as a helical segment. Topologically, residues 261–274 (TQAVAPDSSSEMGD) are extracellular. A helical transmembrane segment spans residues 275–295 (LLAFRFYAFNPILDPWVFILF). Residues 296–386 (RKAVFQRLKL…AEASVACSLC (91 aa)) lie on the Cytoplasmic side of the membrane. A disordered region spans residues 322–376 (PLSQLASGRRDPRAPSAPVGKEGSCVPLSAWGEGQVEPLPPTQQSSGSAVGTSSK). Residues 363-376 (TQQSSGSAVGTSSK) show a composition bias toward polar residues. C383 is modified (cysteine methyl ester). Residue C383 is the site of S-farnesyl cysteine attachment. A propeptide spans 384 to 386 (SLC) (removed in mature form).

This sequence belongs to the G-protein coupled receptor 1 family. In terms of assembly, interacts (non-isoprenylated C-terminus) with PDZK1. Post-translationally, isoprenylation does not influence ligand binding but is required for efficient coupling to the effectors adenylyl cyclase and phospholipase C.

Its subcellular location is the cell membrane. Receptor for prostacyclin (prostaglandin I2 or PGI2). The activity of this receptor is mediated by G(s) proteins which activate adenylate cyclase. The sequence is that of Prostacyclin receptor (PTGIR) from Homo sapiens (Human).